Consider the following 317-residue polypeptide: SURF1-like protein (317 aa).

2 helical membrane passes run 78–98 (GSILMLGLPAFAFSLGVWQIY) and 293–313 (HMNYLTTWFTLTLVTMLMWIH).

It belongs to the SURF1 family.

The protein localises to the mitochondrion inner membrane. In terms of biological role, probably involved in the biogenesis of the COX complex. This Caenorhabditis briggsae protein is SURF1-like protein (sft-1).